The primary structure comprises 499 residues: NAD(P)H-quinone oxidoreductase chain 4, chloroplastic (499 aa).

Transmembrane regions (helical) follow at residues Phe-4 to Leu-24, Tyr-35 to Phe-55, Gly-84 to Ala-104, Ser-111 to Phe-129, Leu-134 to Val-154, Phe-167 to Leu-187, Ala-208 to Ile-228, His-242 to Ile-262, Ala-272 to Ala-292, Ile-305 to Asp-325, Gly-330 to Gly-350, Leu-386 to Thr-406, Ile-416 to Met-436, and Leu-462 to Val-482.

The protein belongs to the complex I subunit 4 family.

The protein localises to the plastid. It localises to the chloroplast thylakoid membrane. The enzyme catalyses a plastoquinone + NADH + (n+1) H(+)(in) = a plastoquinol + NAD(+) + n H(+)(out). It carries out the reaction a plastoquinone + NADPH + (n+1) H(+)(in) = a plastoquinol + NADP(+) + n H(+)(out). The protein is NAD(P)H-quinone oxidoreductase chain 4, chloroplastic of Citrus sinensis (Sweet orange).